The following is a 711-amino-acid chain: RB-associated KRAB zinc finger protein (711 aa).

In terms of domain architecture, KRAB spans 8 to 79 (LSFKDVAVAF…EGDRHAQRHL (72 aa)). Residues K97 and K256 each participate in a glycyl lysine isopeptide (Lys-Gly) (interchain with G-Cter in SUMO2) cross-link. Residues 170–257 (AYGESLEDFN…YPRSQMELKP (88 aa)) are required for interaction with RB1. C2H2-type zinc fingers lie at residues 258-280 (FECT…QRAH) and 286-308 (YACS…RRSH). A Glycyl lysine isopeptide (Lys-Gly) (interchain with G-Cter in SUMO2) cross-link involves residue K312. 6 consecutive C2H2-type zinc fingers follow at residues 314–336 (YKCN…QRTH), 342–364 (YECS…QRNH), 370–392 (YPCN…QRTH), 398–420 (YKCN…QRTH), 426–448 (YQCS…YRSH), and 454–476 (YECT…WKVH). A Glycyl lysine isopeptide (Lys-Gly) (interchain with G-Cter in SUMO2) cross-link involves residue K354. Residues 414–711 (ITHQRTHTGE…TVNVLTVEKL (298 aa)) are interaction with AR. The segment at 508 to 530 (YECNECGKTFLDSSAFHRHQSVP) adopts a C2H2-type 9; degenerate zinc-finger fold. K534 is covalently cross-linked (Glycyl lysine isopeptide (Lys-Gly) (interchain with G-Cter in SUMO2)). 6 C2H2-type zinc fingers span residues 536-558 (YECN…YRGH), 564-586 (FGCS…QRVH), 592-614 (YECY…HRIH), 620-642 (YECS…YRSH), 648-670 (YECN…YRTH), and 676-698 (YECN…QRIH).

The protein belongs to the krueppel C2H2-type zinc-finger protein family. As to quaternary structure, interacts with AR. May also interact with other nuclear hormone receptors such as NR3C1/GR. Interacts with RB1.

It is found in the nucleus. Functionally, may repress E2F-dependent transcription. May promote AR-dependent transcription. The chain is RB-associated KRAB zinc finger protein (Rbak) from Mus musculus (Mouse).